A 228-amino-acid polypeptide reads, in one-letter code: Auxin-responsive protein IAA14 (228 aa).

The EAR-like (transcriptional repression) signature appears at 8-12 (LCLGL). One can recognise a PB1 domain in the interval 110-210 (VAFVKVSMDG…SCKRLRIMKG (101 aa)).

Belongs to the Aux/IAA family. As to quaternary structure, homodimers and heterodimers. Interacts with TPL. Preferentially expressed in roots and flowers.

The protein localises to the nucleus. Its function is as follows. Aux/IAA proteins are short-lived transcriptional factors that function as repressors of early auxin response genes at low auxin concentrations. Repression is thought to result from the interaction with auxin response factors (ARFs), proteins that bind to the auxin-responsive promoter element (AuxRE). Formation of heterodimers with ARF proteins may alter their ability to modulate early auxin response genes expression. This chain is Auxin-responsive protein IAA14 (IAA14), found in Arabidopsis thaliana (Mouse-ear cress).